The chain runs to 307 residues: L-lactate dehydrogenase (307 aa).

NAD(+) contacts are provided by residues V13, D34, R39, Y64, and 78-79 (GV). R87 contributes to the substrate binding site. Position 100 (S100) interacts with NAD(+). A substrate-binding site is contributed by 119–122 (NPVD). Residue T142 coordinates NAD(+). 147 to 150 (DSAR) contributes to the substrate binding site. The Proton acceptor role is filled by H174. T224 is a substrate binding site.

Belongs to the LDH/MDH superfamily. LDH family. Homotetramer.

The protein localises to the cytoplasm. It carries out the reaction (S)-lactate + NAD(+) = pyruvate + NADH + H(+). The protein operates within fermentation; pyruvate fermentation to lactate; (S)-lactate from pyruvate: step 1/1. Its function is as follows. Catalyzes the conversion of lactate to pyruvate. This chain is L-lactate dehydrogenase, found in Lactobacillus delbrueckii subsp. bulgaricus (strain ATCC BAA-365 / Lb-18).